The following is a 173-amino-acid chain: uncharacterized protein (173 aa).

This is an uncharacterized protein from Haemophilus influenzae (strain ATCC 51907 / DSM 11121 / KW20 / Rd).